We begin with the raw amino-acid sequence, 308 residues long: uncharacterized protein (308 aa).

The segment at Gly-158–Glu-221 is disordered. Residues Arg-206–Glu-221 show a composition bias toward basic and acidic residues.

This is an uncharacterized protein from Arabidopsis thaliana (Mouse-ear cress).